The primary structure comprises 288 residues: Pantothenate synthetase (288 aa).

Methionine 30–histidine 37 provides a ligand contact to ATP. The active-site Proton donor is the histidine 37. Glutamine 61 provides a ligand contact to (R)-pantoate. Glutamine 61 is a binding site for beta-alanine. Residue glycine 147–aspartate 150 participates in ATP binding. Glutamine 153 is a (R)-pantoate binding site. ATP contacts are provided by residues valine 176 and isoleucine 184–arginine 187.

Belongs to the pantothenate synthetase family. Homodimer.

It is found in the cytoplasm. The catalysed reaction is (R)-pantoate + beta-alanine + ATP = (R)-pantothenate + AMP + diphosphate + H(+). It functions in the pathway cofactor biosynthesis; (R)-pantothenate biosynthesis; (R)-pantothenate from (R)-pantoate and beta-alanine: step 1/1. Catalyzes the condensation of pantoate with beta-alanine in an ATP-dependent reaction via a pantoyl-adenylate intermediate. In Chlorobium phaeobacteroides (strain BS1), this protein is Pantothenate synthetase.